The following is a 166-amino-acid chain: 2-C-methyl-D-erythritol 2,4-cyclodiphosphate synthase (166 aa).

Residues Asp-15 and His-17 each contribute to the a divalent metal cation site. Residues 15–17 (DIH) and 43–44 (HS) contribute to the 4-CDP-2-C-methyl-D-erythritol 2-phosphate site. A divalent metal cation is bound at residue His-51. 4-CDP-2-C-methyl-D-erythritol 2-phosphate-binding positions include 65-67 (DIG), 141-144 (TTNE), and Arg-151.

This sequence belongs to the IspF family. As to quaternary structure, homotrimer. It depends on a divalent metal cation as a cofactor.

The enzyme catalyses 4-CDP-2-C-methyl-D-erythritol 2-phosphate = 2-C-methyl-D-erythritol 2,4-cyclic diphosphate + CMP. It functions in the pathway isoprenoid biosynthesis; isopentenyl diphosphate biosynthesis via DXP pathway; isopentenyl diphosphate from 1-deoxy-D-xylulose 5-phosphate: step 4/6. Its function is as follows. Involved in the biosynthesis of isopentenyl diphosphate (IPP) and dimethylallyl diphosphate (DMAPP), two major building blocks of isoprenoid compounds. Catalyzes the conversion of 4-diphosphocytidyl-2-C-methyl-D-erythritol 2-phosphate (CDP-ME2P) to 2-C-methyl-D-erythritol 2,4-cyclodiphosphate (ME-CPP) with a corresponding release of cytidine 5-monophosphate (CMP). The sequence is that of 2-C-methyl-D-erythritol 2,4-cyclodiphosphate synthase from Prochlorococcus marinus (strain MIT 9215).